We begin with the raw amino-acid sequence, 142 residues long: Hemoglobin subunit alpha (142 aa).

One can recognise a Globin domain in the interval 2–142 (VLSPDDKKHV…VSTVLTSKYR (141 aa)). Position 4 is a phosphoserine (Ser-4). N6-succinyllysine occurs at positions 8 and 12. Lys-17 is subject to N6-acetyllysine; alternate. At Lys-17 the chain carries N6-succinyllysine; alternate. Phosphotyrosine is present on Tyr-25. Ser-36 is modified (phosphoserine). Lys-41 is subject to N6-succinyllysine. Residue Ser-50 is modified to Phosphoserine. Position 59 (His-59) interacts with O2. His-88 is a heme b binding site. Ser-103 is subject to Phosphoserine. Thr-109 is modified (phosphothreonine). A phosphoserine mark is found at Ser-125 and Ser-132. 2 positions are modified to phosphothreonine: Thr-135 and Thr-138. Ser-139 is modified (phosphoserine).

It belongs to the globin family. As to quaternary structure, heterotetramer of two alpha chains and two beta chains. In terms of tissue distribution, red blood cells.

Involved in oxygen transport from the lung to the various peripheral tissues. Functionally, hemopressin acts as an antagonist peptide of the cannabinoid receptor CNR1. Hemopressin-binding efficiently blocks cannabinoid receptor CNR1 and subsequent signaling. The polypeptide is Hemoglobin subunit alpha (HBA) (Papio anubis (Olive baboon)).